The following is a 131-amino-acid chain: SPbeta prophage-derived uncharacterized protein YomZ (131 aa).

This chain is SPbeta prophage-derived uncharacterized protein YomZ (yomZ), found in Bacillus subtilis (strain 168).